Consider the following 204-residue polypeptide: UPF0056 membrane protein CT_852 (204 aa).

6 helical membrane-spanning segments follow: residues 9-29, 39-59, 66-86, 107-127, 138-158, and 176-196; these read TLLF…IALL, HIIL…VTFG, LGII…SIAI, IFFP…STLG, IVLG…LLSS, and FGIS…STAF.

The protein belongs to the UPF0056 (MarC) family.

The protein resides in the cell membrane. The protein is UPF0056 membrane protein CT_852 of Chlamydia trachomatis serovar D (strain ATCC VR-885 / DSM 19411 / UW-3/Cx).